A 442-amino-acid polypeptide reads, in one-letter code: Protein translocase subunit SecF (442 aa).

A disordered region spans residues 1–39 (MASKAKTGRDDEATSAVELTEATESAVARTDGDSTTDTA). The next 6 membrane-spanning stretches (helical) occupy residues 67-87 (WFGVSGAIVAVAIASIVFRGF), 187-207 (ITKKAVIALVVFLVLVALYIT), 218-238 (AITAMLFDLTVTAGVYSLVGF), 243-263 (ATVIGLLTILGFSLYDTVIVF), 301-321 (LIGVLPVLALMLVAVWLLGVG), and 331-351 (LIGIIIGTYSSIFFATPLLVT). Residues 366–442 (VLKRRNSGSP…PTGKRNAGRR (77 aa)) are disordered. The span at 402–432 (QASSQSAPRAAQGSSKPAPGARPVRPVGTRR) shows a compositional bias: low complexity. The segment covering 433-442 (PTGKRNAGRR) has biased composition (basic residues).

The protein belongs to the SecD/SecF family. SecF subfamily. As to quaternary structure, forms a complex with SecD. Part of the essential Sec protein translocation apparatus which comprises SecA, SecYEG and auxiliary proteins SecDF. Other proteins may also be involved.

The protein localises to the cell membrane. Part of the Sec protein translocase complex. Interacts with the SecYEG preprotein conducting channel. SecDF uses the proton motive force (PMF) to complete protein translocation after the ATP-dependent function of SecA. This chain is Protein translocase subunit SecF, found in Mycobacterium tuberculosis (strain CDC 1551 / Oshkosh).